Here is a 141-residue protein sequence, read N- to C-terminus: Hemoglobin subunit alpha (141 aa).

The Globin domain maps to 1 to 141; it reads VLSPDDKKHV…VSTVLTSKYR (141 aa). Ser3 bears the Phosphoserine mark. 2 positions are modified to N6-succinyllysine: Lys7 and Lys11. An N6-acetyllysine; alternate modification is found at Lys16. N6-succinyllysine; alternate is present on Lys16. Tyr24 bears the Phosphotyrosine mark. Ser35 carries the post-translational modification Phosphoserine. The residue at position 40 (Lys40) is an N6-succinyllysine. Phosphoserine is present on Ser49. Residue His58 participates in O2 binding. His87 is a binding site for heme b. Ser102 is modified (phosphoserine). Thr108 carries the post-translational modification Phosphothreonine. Residues Ser124 and Ser131 each carry the phosphoserine modification. Residues Thr134 and Thr137 each carry the phosphothreonine modification. Ser138 is subject to Phosphoserine.

This sequence belongs to the globin family. As to quaternary structure, heterotetramer of two alpha chains and two beta chains. In terms of tissue distribution, red blood cells.

Its function is as follows. Involved in oxygen transport from the lung to the various peripheral tissues. In terms of biological role, hemopressin acts as an antagonist peptide of the cannabinoid receptor CNR1. Hemopressin-binding efficiently blocks cannabinoid receptor CNR1 and subsequent signaling. This chain is Hemoglobin subunit alpha (HBA), found in Theropithecus gelada (Gelada baboon).